The primary structure comprises 574 residues: Sentrin-specific protease 3 (574 aa).

The segment at 1 to 125 (MKETIQGTGS…PTHRKTCSQR (125 aa)) is disordered. A phosphoserine mark is found at Ser-54, Ser-73, and Ser-75. The span at 74-93 (ASEEEEEEEEEEDEDEEEEV) shows a compositional bias: acidic residues. Basic residues predominate over residues 112-125 (RPSRPTHRKTCSQR). Short sequence motifs (nuclear localization signal) lie at residues 125–128 (RRRR) and 153–159 (RHRGRRR). A disordered region spans residues 161–181 (LAHPKNHLSPQQGGATPQVPS). Phosphoserine is present on Ser-169. Residue Thr-176 is modified to Phosphothreonine. Phosphoserine is present on residues Ser-181, Ser-188, Ser-212, and Ser-232. The interval 386–543 (HVLTMDDLGT…AFVLQYCKHL (158 aa)) is protease. Active-site residues include His-465 and Asp-482. Cys-532 functions as the Nucleophile in the catalytic mechanism.

The protein belongs to the peptidase C48 family. In terms of assembly, component of some MLL1/MLL complex, at least composed of the core components KMT2A/MLL1, ASH2L, HCFC1/HCF1, WDR5 and RBBP5, as well as the facultative components BACC1, CHD8, E2F6, HSP70, INO80C, KANSL1, LAS1L, MAX, MCRS1, MGA, MYST1/MOF, PELP1, PHF20, PRP31, RING2, RUVB1/TIP49A, RUVB2/TIP49B, SENP3, TAF1, TAF4, TAF6, TAF7, TAF9 and TEX10. Interacts with EP300, NPM1 and CDCA8. Component of the 5FMC complex, at least composed of PELP1, LAS1L, TEX10, WDR18 and SENP3; the complex interacts with methylated CHTOP and ZNF148. Interacts with NOL9. Interacts with CCAR2.

Its subcellular location is the nucleus. It is found in the nucleolus. It localises to the nucleoplasm. The protein localises to the cytoplasm. On oxidative stress, SENP3 degradation is blocked by inhibition of its ubiquitination, which stabilizes it as it accumulates in the nucleoplasm. In terms of biological role, protease that releases SUMO2 and SUMO3 monomers from sumoylated substrates, but has only weak activity against SUMO1 conjugates. Deconjugates SUMO2 from MEF2D, which increases its transcriptional activation capability. Deconjugates SUMO2 and SUMO3 from CDCA8. Redox sensor that, when redistributed into nucleoplasm, can act as an effector to enhance HIF1A transcriptional activity by desumoylating EP300. Required for rRNA processing through deconjugation of SUMO2 and SUMO3 from nucleophosmin, NPM1. Plays a role in the regulation of sumoylation status of ZNF148. Functions as a component of the Five Friends of Methylated CHTOP (5FMC) complex; the 5FMC complex is recruited to ZNF148 by methylated CHTOP, leading to desumoylation of ZNF148 and subsequent transactivation of ZNF148 target genes. Deconjugates SUMO2 from KAT5. Catalyzes desumoylation of MRE11. This Homo sapiens (Human) protein is Sentrin-specific protease 3.